The chain runs to 195 residues: Ubiquitin-conjugating enzyme E2 T (195 aa).

Residues 2 to 152 form the UBC core domain; the sequence is QRTSRLKREL…ARQWTEKHAR (151 aa). Catalysis depends on C86, which acts as the Glycyl thioester intermediate. K91 participates in a covalent cross-link: Glycyl lysine isopeptide (Lys-Gly) (interchain with G-Cter in ubiquitin). Over residues 146–157 the composition is skewed to basic and acidic residues; it reads WTEKHARQKTDE. The tract at residues 146–195 is disordered; that stretch reads WTEKHARQKTDEEGMPGSLPEVGGSEGPSAAQKRKAGQLSSGGKRFCPDV. A Glycyl lysine isopeptide (Lys-Gly) (interchain with G-Cter in ubiquitin) cross-link involves residue K180. K189 participates in a covalent cross-link: Glycyl lysine isopeptide (Lys-Gly) (interchain with G-Cter in SUMO2).

Belongs to the ubiquitin-conjugating enzyme family. As to quaternary structure, interacts with FANCL and BRCA1. In terms of processing, auto-ubiquitinated. Effects of auto-monoubiquitination at Lys-91 and Lys-180 are unclear.

Its subcellular location is the nucleus. The enzyme catalyses S-ubiquitinyl-[E1 ubiquitin-activating enzyme]-L-cysteine + [E2 ubiquitin-conjugating enzyme]-L-cysteine = [E1 ubiquitin-activating enzyme]-L-cysteine + S-ubiquitinyl-[E2 ubiquitin-conjugating enzyme]-L-cysteine.. The protein operates within protein modification; protein ubiquitination. Functionally, accepts ubiquitin from the E1 complex and catalyzes its covalent attachment to other proteins. Catalyzes monoubiquitination. Involved in mitomycin-C (MMC)-induced DNA repair: acts as a specific E2 ubiquitin-conjugating enzyme for the Fanconi anemia complex by associating with E3 ubiquitin-protein ligase FANCL and catalyzing monoubiquitination of FANCD2, a key step in the DNA damage pathway. Also mediates monoubiquitination of FANCL and FANCI. May contribute to ubiquitination and degradation of BRCA1. In vitro able to promote polyubiquitination using all 7 ubiquitin Lys residues, but may prefer 'Lys-11'-, 'Lys-27'-, 'Lys-48'- and 'Lys-63'-linked polyubiquitination. The protein is Ubiquitin-conjugating enzyme E2 T (UBE2T) of Bos taurus (Bovine).